Reading from the N-terminus, the 184-residue chain is Ribosome-recycling factor (184 aa).

Belongs to the RRF family.

The protein localises to the cytoplasm. Functionally, responsible for the release of ribosomes from messenger RNA at the termination of protein biosynthesis. May increase the efficiency of translation by recycling ribosomes from one round of translation to another. This Stenotrophomonas maltophilia (strain K279a) protein is Ribosome-recycling factor.